A 534-amino-acid chain; its full sequence is MTKYIFVTGGVVSSIGKGIVAASLGRLLKNRGLKVTIQKFDPYINIDPGTMSPYQHGEVYVTDDGAETDLDLGHYERFIDINLNKYSNVTTGKIYSEVLKKERRGEYLGATVQVIPHVTDALKEKIKRAATTTDSDVIITEVGGTVGDIESLPFLEALRQMKADVGSDNVMYIHTTLLPYLKAAGEMKTKPTQHSVKELRGLGIQPNMLVIRTEQPAGQSIKNKLAQFCDVAPEAVIESLDVDHIYQIPLNMQAQNMDQIVCDHLKLETPAADMTEWSAMVDKVMNLEKKVKIALVGKYVELPDAYLSVVEALKHSGYVNDVAIDLKWVNAAEVTEDNIKELVGDADGIIVPGGFGQRGSEGKIEAIRYARENDVPMLGVCLGMQLTCVEFARNVLNLHGANSAELDPKTPFPIIDIMRDQIDIEDMGGTLRLGLYPCKLKSGSRAAAAYNNQEVVQRRHRHRYEFNTKFREQFEAAGFVFSGVSPDNRLMEVVELPEKKFFVAAQYHPELQSRPNHAEELYTAFVTAAVENMK.

Positions 1-267 (MTKYIFVTGG…DQIVCDHLKL (267 aa)) are amidoligase domain. S13 contacts CTP. S13 is a UTP binding site. Residue 14–19 (SIGKGI) coordinates ATP. Y54 is an L-glutamine binding site. D71 contacts ATP. Mg(2+) contacts are provided by D71 and E141. Residues 148–150 (DIE), 188–193 (KTKPTQ), and K224 each bind CTP. Residues 188–193 (KTKPTQ) and K224 each bind UTP. The Glutamine amidotransferase type-1 domain maps to 292–534 (KIALVGKYVE…FVTAAVENMK (243 aa)). G354 contacts L-glutamine. C381 acts as the Nucleophile; for glutamine hydrolysis in catalysis. Residues 382–385 (LGMQ), E405, and R463 each bind L-glutamine. Catalysis depends on residues H508 and E510.

This sequence belongs to the CTP synthase family. In terms of assembly, homotetramer.

It carries out the reaction UTP + L-glutamine + ATP + H2O = CTP + L-glutamate + ADP + phosphate + 2 H(+). The catalysed reaction is L-glutamine + H2O = L-glutamate + NH4(+). The enzyme catalyses UTP + NH4(+) + ATP = CTP + ADP + phosphate + 2 H(+). It functions in the pathway pyrimidine metabolism; CTP biosynthesis via de novo pathway; CTP from UDP: step 2/2. Its activity is regulated as follows. Allosterically activated by GTP, when glutamine is the substrate; GTP has no effect on the reaction when ammonia is the substrate. The allosteric effector GTP functions by stabilizing the protein conformation that binds the tetrahedral intermediate(s) formed during glutamine hydrolysis. Inhibited by the product CTP, via allosteric rather than competitive inhibition. In terms of biological role, catalyzes the ATP-dependent amination of UTP to CTP with either L-glutamine or ammonia as the source of nitrogen. Regulates intracellular CTP levels through interactions with the four ribonucleotide triphosphates. In Streptococcus agalactiae serotype V (strain ATCC BAA-611 / 2603 V/R), this protein is CTP synthase.